The following is a 539-amino-acid chain: Membrane protein insertase YidC (539 aa).

Residues Ile7–Met27 form a helical membrane-spanning segment. The disordered stretch occupies residues Gln32–Ala64. A run of 3 helical transmembrane segments spans residues Tyr347–Trp367, Gly418–Leu438, and Ile498–Val518.

It belongs to the OXA1/ALB3/YidC family. Type 1 subfamily. Interacts with the Sec translocase complex via SecD. Specifically interacts with transmembrane segments of nascent integral membrane proteins during membrane integration.

The protein localises to the cell inner membrane. Functionally, required for the insertion and/or proper folding and/or complex formation of integral membrane proteins into the membrane. Involved in integration of membrane proteins that insert both dependently and independently of the Sec translocase complex, as well as at least some lipoproteins. Aids folding of multispanning membrane proteins. The chain is Membrane protein insertase YidC from Nitratidesulfovibrio vulgaris (strain DSM 19637 / Miyazaki F) (Desulfovibrio vulgaris).